The primary structure comprises 325 residues: Probable tRNA pseudouridine synthase B (325 aa).

The active-site Nucleophile is the aspartate 71. Residues 238–313 (LPKIYVKDSA…VAASIERVIM (76 aa)) form the PUA domain.

The protein belongs to the pseudouridine synthase TruB family. Type 2 subfamily.

It carries out the reaction uridine(55) in tRNA = pseudouridine(55) in tRNA. Its function is as follows. Could be responsible for synthesis of pseudouridine from uracil-55 in the psi GC loop of transfer RNAs. The sequence is that of Probable tRNA pseudouridine synthase B from Korarchaeum cryptofilum (strain OPF8).